The following is a 383-amino-acid chain: Lipid-A-disaccharide synthase (383 aa).

Belongs to the LpxB family.

The catalysed reaction is 2-N,3-O-bis[(3R)-3-hydroxytetradecanoyl]-alpha-D-glucosaminyl 1-phosphate + UDP-2-N,3-O-bis[(3R)-3-hydroxytetradecanoyl]-alpha-D-glucosamine = lipid A disaccharide (E. coli) + UDP + H(+). It catalyses the reaction a lipid X + a UDP-2-N,3-O-bis[(3R)-3-hydroxyacyl]-alpha-D-glucosamine = a lipid A disaccharide + UDP + H(+). Its pathway is glycolipid biosynthesis; lipid IV(A) biosynthesis; lipid IV(A) from (3R)-3-hydroxytetradecanoyl-[acyl-carrier-protein] and UDP-N-acetyl-alpha-D-glucosamine: step 5/6. Its function is as follows. Condensation of UDP-2,3-diacylglucosamine and 2,3-diacylglucosamine-1-phosphate to form lipid A disaccharide, a precursor of lipid A, a phosphorylated glycolipid that anchors the lipopolysaccharide to the outer membrane of the cell. The chain is Lipid-A-disaccharide synthase from Pectobacterium carotovorum subsp. carotovorum (strain PC1).